Consider the following 247-residue polypeptide: 2,3-bisphosphoglycerate-dependent phosphoglycerate mutase (247 aa).

Substrate contacts are provided by residues 9–16 (RHGESEWN), 22–23 (TG), arginine 61, 88–91 (ERHY), lysine 99, 115–116 (RR), and 183–184 (GN). Residue histidine 10 is the Tele-phosphohistidine intermediate of the active site. Glutamate 88 serves as the catalytic Proton donor/acceptor.

This sequence belongs to the phosphoglycerate mutase family. BPG-dependent PGAM subfamily.

The enzyme catalyses (2R)-2-phosphoglycerate = (2R)-3-phosphoglycerate. It participates in carbohydrate degradation; glycolysis; pyruvate from D-glyceraldehyde 3-phosphate: step 3/5. Catalyzes the interconversion of 2-phosphoglycerate and 3-phosphoglycerate. In Nocardioides sp. (strain ATCC BAA-499 / JS614), this protein is 2,3-bisphosphoglycerate-dependent phosphoglycerate mutase.